The sequence spans 149 residues: D-aminoacyl-tRNA deacylase (149 aa).

Residues 137–138 carry the Gly-cisPro motif, important for rejection of L-amino acids motif; the sequence is GP.

It belongs to the DTD family. In terms of assembly, homodimer.

The protein resides in the cytoplasm. It carries out the reaction glycyl-tRNA(Ala) + H2O = tRNA(Ala) + glycine + H(+). It catalyses the reaction a D-aminoacyl-tRNA + H2O = a tRNA + a D-alpha-amino acid + H(+). An aminoacyl-tRNA editing enzyme that deacylates mischarged D-aminoacyl-tRNAs. Also deacylates mischarged glycyl-tRNA(Ala), protecting cells against glycine mischarging by AlaRS. Acts via tRNA-based rather than protein-based catalysis; rejects L-amino acids rather than detecting D-amino acids in the active site. By recycling D-aminoacyl-tRNA to D-amino acids and free tRNA molecules, this enzyme counteracts the toxicity associated with the formation of D-aminoacyl-tRNA entities in vivo and helps enforce protein L-homochirality. In Clostridium kluyveri (strain ATCC 8527 / DSM 555 / NBRC 12016 / NCIMB 10680 / K1), this protein is D-aminoacyl-tRNA deacylase.